Here is a 24-residue protein sequence, read N- to C-terminus: MRITVNVDGTSYTDEVEPRTLLVH.

Heterotrimer composed of an alpha, a beta and a gamma chain.

The polypeptide is Formate ester dehydrogenase gamma chain (Amycolatopsis methanolica).